Consider the following 454-residue polypeptide: uncharacterized protein (454 aa).

An ATP-binding site is contributed by 125–132 (GDVGCGKT).

This sequence belongs to the AFG1 ATPase family.

This is an uncharacterized protein from Schizosaccharomyces pombe (strain 972 / ATCC 24843) (Fission yeast).